Consider the following 158-residue polypeptide: uncharacterized protein (158 aa).

2 disordered regions span residues 1–86 (MDFR…DHWW) and 138–158 (ASQV…LLGF). Residues 7–76 (SPTTCTTPAS…PTPASSGSAA (70 aa)) show a composition bias toward low complexity.

This is an uncharacterized protein from Homo sapiens (Human).